A 502-amino-acid polypeptide reads, in one-letter code: MLKEFKEQRLKEIQELRSMGIEPYPYKFEKELTAREIREKYDYLQAGEVLESEKLSFAGRVMSIRHHGKTAFFHMKDDTGRIQAYIKADSVGKEKMDLFKRHVKIGDFVGVRGFPFKSKTGELTIYVQEYTLLSKALRPLPEKWHGIKDKEIIYRQRYLELIVNDEAIERFKKRFKAVRVIREFLNSRGFIEVETPILHYVTGGAEARPFVTHLNVFDIDMYLRIAPELYLKRLIVGGFEKIYEIGKNFRNEGISYKHSPEFTSIEIYQAYADYNDMMDLTEELIVEVVKRTCGTLKISYQGKEIDFTPPWKRVRMRDFLKEKLGVDILEDPDEVLLKKLEEHGVELEIKNRAHLIDKLRDLVEEELVNPTFIIDHPVVISPLAKRHREDPRLTERFELIIFGREIANAFSELNDPVDQYQRFLEQAKMREEGDEEAHMMDLDFVRALEYGMPPTGGLGIGLDRLFMFITDSPTIRDVIPFPIVKPKKFEEEEAEFEGGFEE.

The Mg(2+) site is built by Glu398 and Glu405.

Belongs to the class-II aminoacyl-tRNA synthetase family. In terms of assembly, homodimer. Mg(2+) is required as a cofactor.

The protein localises to the cytoplasm. It catalyses the reaction tRNA(Lys) + L-lysine + ATP = L-lysyl-tRNA(Lys) + AMP + diphosphate. This Thermotoga maritima (strain ATCC 43589 / DSM 3109 / JCM 10099 / NBRC 100826 / MSB8) protein is Lysine--tRNA ligase (lysS).